A 62-amino-acid chain; its full sequence is Large ribosomal subunit protein uL29 (62 aa).

It belongs to the universal ribosomal protein uL29 family.

In Geobacter sp. (strain M21), this protein is Large ribosomal subunit protein uL29.